Consider the following 183-residue polypeptide: Dual-action ribosomal maturation protein DarP (183 aa).

Belongs to the DarP family.

The protein resides in the cytoplasm. Member of a network of 50S ribosomal subunit biogenesis factors which assembles along the 30S-50S interface, preventing incorrect 23S rRNA structures from forming. Promotes peptidyl transferase center (PTC) maturation. This Shigella flexneri serotype 5b (strain 8401) protein is Dual-action ribosomal maturation protein DarP.